A 554-amino-acid chain; its full sequence is Raftlin (554 aa).

Residue Gly2 is the site of N-myristoyl glycine attachment. A lipid anchor (S-palmitoyl cysteine) is attached at Cys3. 2 positions are modified to phosphoserine: Ser183 and Ser199. Disordered stretches follow at residues Cys192–Gly249, Lys441–Ser488, and Gly504–Asn554. Composition is skewed to basic and acidic residues over residues Ser198–Glu209 and Gln475–Phe487. Phosphoserine occurs at positions 507 and 530. Residues His526 to Ala542 show a composition bias toward basic and acidic residues.

The protein belongs to the raftlin family. In terms of assembly, interacts with TLR4; the interaction occurs in response to lipopolysaccharide stimulation. Interacts with CLTC; the interaction occurs in response to pathogens. Interacts with AP2A1 and AP2B1. As to expression, expressed in T-cells, B-cells, thymus and spleen (at protein level). Expressed in dendritic cells, macrophages, heart, lung and small intestine.

Its subcellular location is the cell membrane. It is found in the cytoplasm. It localises to the membrane raft. The protein resides in the endosome. The protein localises to the early endosome. In terms of biological role, involved in protein trafficking via association with clathrin and AP2 complex. Upon bacterial lipopolysaccharide stimulation, mediates internalization of TLR4 to endosomes in dendritic cells and macrophages, and internalization of poly(I:C) to TLR3-positive endosomes in myeloid dendritic cells and epithelial cells; resulting in activation of TICAM1-mediated signaling and subsequent IFNB1 production. Involved in T-cell antigen receptor-mediated signaling by regulating tyrosine kinase LCK localization, T-cell dependent antibody production and cytokine secretion. May regulate B-cell antigen receptor-mediated signaling. May play a pivotal role in the formation and/or maintenance of lipid rafts. In Mus musculus (Mouse), this protein is Raftlin (Rftn1).